A 182-amino-acid polypeptide reads, in one-letter code: CASP-like protein 5A1 (182 aa).

Residues 1-47 lie on the Cytoplasmic side of the membrane; sequence MEMASHPAVHPVALPPPYQAVGPPAPPAVRINDFPGSPGTLMGLALR. Residues 48 to 68 traverse the membrane as a helical segment; sequence FAQLGFALTALCIMVSIVGFS. The Extracellular portion of the chain corresponds to 69-72; that stretch reads SVTA. Residues 73 to 93 form a helical membrane-spanning segment; the sequence is FCFLVAAMVLQCIWSLCLGVL. Residues 94-117 lie on the Cytoplasmic side of the membrane; the sequence is DCYALLTKRSLRNSLILSFFVVGD. A helical membrane pass occupies residues 118 to 138; sequence WITSTMTFAGACAAAGITVLI. The Extracellular portion of the chain corresponds to 139-158; it reads DNDLNQCGPNHCNRFEAAAA. The helical transmembrane segment at 159 to 179 threads the bilayer; the sequence is MAFMSWVITTISFFLSFWILV. The Cytoplasmic segment spans residues 180-182; it reads TCR.

Belongs to the Casparian strip membrane proteins (CASP) family. As to quaternary structure, homodimer and heterodimers.

It is found in the cell membrane. This chain is CASP-like protein 5A1, found in Physcomitrium patens (Spreading-leaved earth moss).